The primary structure comprises 293 residues: Small ribosomal subunit protein uS3 (293 aa).

The 72-residue stretch at 39–110 (IRREIMKFLK…KISIKIKEVK (72 aa)) folds into the KH type-2 domain.

Belongs to the universal ribosomal protein uS3 family. In terms of assembly, part of the 30S ribosomal subunit. Forms a tight complex with proteins S10 and S14.

Binds the lower part of the 30S subunit head. Binds mRNA in the 70S ribosome, positioning it for translation. The polypeptide is Small ribosomal subunit protein uS3 (Borreliella burgdorferi (strain ATCC 35210 / DSM 4680 / CIP 102532 / B31) (Borrelia burgdorferi)).